The primary structure comprises 240 residues: Protein MGARP (240 aa).

Residues M1–G40 are Cytoplasmic-facing. Residues S41–A63 form a helical; Anchor for type IV membrane protein membrane-spanning segment. Topologically, residues Y64–G240 are mitochondrial intermembrane. The disordered stretch occupies residues R166–G240. Over residues E170–N181 the composition is skewed to low complexity. A compositionally biased stretch (basic and acidic residues) spans D191–T201. Acidic residues predominate over residues S202–S213. Residues E228–G240 are compositionally biased toward low complexity.

As to quaternary structure, interacts with RHOT1/Miro-1, TRAK1/OIP106 and TRAK2/GRIF1. Interacts with RHOT2/Miro-2. In terms of tissue distribution, expressed in the brain, adrenal gland and corneal endothelium (CE). Expressed in steroid-producing cells of the ovary and testis (at protein level). Expressed in steroid-producing cells of the ovary and testis. Weakly expressed in placenta. Expressed in corneal endothelial cells.

Its subcellular location is the mitochondrion. It is found in the mitochondrion outer membrane. The protein resides in the mitochondrion inner membrane. In terms of biological role, plays a role in the trafficking of mitochondria along microtubules. Regulates the kinesin-mediated axonal transport of mitochondria to nerve terminals along microtubules during hypoxia. Participates in the translocation of TRAK2/GRIF1 from the cytoplasm to the mitochondrion. Also plays a role in steroidogenesis through maintenance of mitochondrial abundance and morphology. Plays an inhibitory role during neocortex development by regulating mitochondrial morphology, distribution and motility in neocortical neurons. In Homo sapiens (Human), this protein is Protein MGARP (MGARP).